The chain runs to 667 residues: DNA ligase (667 aa).

NAD(+) contacts are provided by residues 32–36 (DSEYD), 81–82 (SL), and E110. K112 (N6-AMP-lysine intermediate) is an active-site residue. 4 residues coordinate NAD(+): R133, E167, K283, and K307. Zn(2+) is bound by residues C401, C404, C419, and C424. The BRCT domain occupies 586–667 (EGHPDFKDKT…FVQKQNEIEG (82 aa)).

This sequence belongs to the NAD-dependent DNA ligase family. LigA subfamily. The cofactor is Mg(2+). Mn(2+) is required as a cofactor.

It catalyses the reaction NAD(+) + (deoxyribonucleotide)n-3'-hydroxyl + 5'-phospho-(deoxyribonucleotide)m = (deoxyribonucleotide)n+m + AMP + beta-nicotinamide D-nucleotide.. Functionally, DNA ligase that catalyzes the formation of phosphodiester linkages between 5'-phosphoryl and 3'-hydroxyl groups in double-stranded DNA using NAD as a coenzyme and as the energy source for the reaction. It is essential for DNA replication and repair of damaged DNA. The sequence is that of DNA ligase from Staphylococcus saprophyticus subsp. saprophyticus (strain ATCC 15305 / DSM 20229 / NCIMB 8711 / NCTC 7292 / S-41).